The chain runs to 344 residues: Arginine N-succinyltransferase (344 aa).

Residue Leu-125 coordinates succinyl-CoA. His-229 acts as the Proton donor in catalysis.

This sequence belongs to the arginine N-succinyltransferase family.

The catalysed reaction is succinyl-CoA + L-arginine = N(2)-succinyl-L-arginine + CoA + H(+). The protein operates within amino-acid degradation; L-arginine degradation via AST pathway; L-glutamate and succinate from L-arginine: step 1/5. Its function is as follows. Catalyzes the transfer of succinyl-CoA to arginine to produce N(2)-succinylarginine. This Salmonella dublin (strain CT_02021853) protein is Arginine N-succinyltransferase.